We begin with the raw amino-acid sequence, 353 residues long: Phosphoribosylformylglycinamidine cyclo-ligase (353 aa).

Belongs to the AIR synthase family.

The protein localises to the cytoplasm. It carries out the reaction 2-formamido-N(1)-(5-O-phospho-beta-D-ribosyl)acetamidine + ATP = 5-amino-1-(5-phospho-beta-D-ribosyl)imidazole + ADP + phosphate + H(+). Its pathway is purine metabolism; IMP biosynthesis via de novo pathway; 5-amino-1-(5-phospho-D-ribosyl)imidazole from N(2)-formyl-N(1)-(5-phospho-D-ribosyl)glycinamide: step 2/2. The sequence is that of Phosphoribosylformylglycinamidine cyclo-ligase from Symbiobacterium thermophilum (strain DSM 24528 / JCM 14929 / IAM 14863 / T).